Consider the following 296-residue polypeptide: Homoserine kinase (296 aa).

85–95 (PLSRGLGSSAA) lines the ATP pocket.

The protein belongs to the GHMP kinase family. Homoserine kinase subfamily.

The protein localises to the cytoplasm. The enzyme catalyses L-homoserine + ATP = O-phospho-L-homoserine + ADP + H(+). It functions in the pathway amino-acid biosynthesis; L-threonine biosynthesis; L-threonine from L-aspartate: step 4/5. Functionally, catalyzes the ATP-dependent phosphorylation of L-homoserine to L-homoserine phosphate. The protein is Homoserine kinase of Clostridium acetobutylicum (strain ATCC 824 / DSM 792 / JCM 1419 / IAM 19013 / LMG 5710 / NBRC 13948 / NRRL B-527 / VKM B-1787 / 2291 / W).